A 137-amino-acid chain; its full sequence is Small ribosomal subunit protein bS6 (137 aa).

The disordered stretch occupies residues 96–137; sequence ITEASPMAKAKDERDTRRSSEERAPRAEATEEAEESAENTAE. The segment covering 104-124 has biased composition (basic and acidic residues); that stretch reads KAKDERDTRRSSEERAPRAEA. Residues 125–137 are compositionally biased toward acidic residues; sequence TEEAEESAENTAE.

This sequence belongs to the bacterial ribosomal protein bS6 family.

Its function is as follows. Binds together with bS18 to 16S ribosomal RNA. This Shewanella pealeana (strain ATCC 700345 / ANG-SQ1) protein is Small ribosomal subunit protein bS6.